A 329-amino-acid polypeptide reads, in one-letter code: Glycerol-3-phosphate dehydrogenase [NAD(P)+] (329 aa).

NADPH is bound by residues W15, H35, and K107. Positions 107, 135, and 137 each coordinate sn-glycerol 3-phosphate. A139 serves as a coordination point for NADPH. The sn-glycerol 3-phosphate site is built by K190, D243, S253, R254, and N255. K190 (proton acceptor) is an active-site residue. An NADPH-binding site is contributed by R254. NADPH-binding residues include L276 and E278.

This sequence belongs to the NAD-dependent glycerol-3-phosphate dehydrogenase family.

The protein resides in the cytoplasm. It catalyses the reaction sn-glycerol 3-phosphate + NAD(+) = dihydroxyacetone phosphate + NADH + H(+). It carries out the reaction sn-glycerol 3-phosphate + NADP(+) = dihydroxyacetone phosphate + NADPH + H(+). It participates in membrane lipid metabolism; glycerophospholipid metabolism. Its function is as follows. Catalyzes the reduction of the glycolytic intermediate dihydroxyacetone phosphate (DHAP) to sn-glycerol 3-phosphate (G3P), the key precursor for phospholipid synthesis. This chain is Glycerol-3-phosphate dehydrogenase [NAD(P)+], found in Rhodopseudomonas palustris (strain TIE-1).